The following is a 168-amino-acid chain: UPF0304 protein MJECS11 (168 aa).

Belongs to the UPF0304 family.

In Methanocaldococcus jannaschii (strain ATCC 43067 / DSM 2661 / JAL-1 / JCM 10045 / NBRC 100440) (Methanococcus jannaschii), this protein is UPF0304 protein MJECS11.